A 165-amino-acid chain; its full sequence is Putative tyrosine-protein phosphatase AMV078 (165 aa).

In terms of domain architecture, Tyrosine-protein phosphatase spans 2–149 (NISNINNDIY…LKFYNSYKNI (148 aa)). Catalysis depends on C94, which acts as the Phosphocysteine intermediate.

The protein belongs to the protein-tyrosine phosphatase family. Non-receptor class dual specificity subfamily.

It catalyses the reaction O-phospho-L-tyrosyl-[protein] + H2O = L-tyrosyl-[protein] + phosphate. This Amsacta moorei entomopoxvirus (AmEPV) protein is Putative tyrosine-protein phosphatase AMV078.